The chain runs to 295 residues: Aspartate carbamoyltransferase catalytic subunit (295 aa).

2 residues coordinate carbamoyl phosphate: arginine 49 and threonine 50. L-aspartate is bound at residue lysine 77. Carbamoyl phosphate contacts are provided by arginine 99, histidine 127, and glutamine 130. L-aspartate contacts are provided by arginine 161 and arginine 212. Residues glycine 251 and proline 252 each coordinate carbamoyl phosphate.

The protein belongs to the aspartate/ornithine carbamoyltransferase superfamily. ATCase family. In terms of assembly, heterododecamer (2C3:3R2) of six catalytic PyrB chains organized as two trimers (C3), and six regulatory PyrI chains organized as three dimers (R2).

It carries out the reaction carbamoyl phosphate + L-aspartate = N-carbamoyl-L-aspartate + phosphate + H(+). The protein operates within pyrimidine metabolism; UMP biosynthesis via de novo pathway; (S)-dihydroorotate from bicarbonate: step 2/3. Its function is as follows. Catalyzes the condensation of carbamoyl phosphate and aspartate to form carbamoyl aspartate and inorganic phosphate, the committed step in the de novo pyrimidine nucleotide biosynthesis pathway. The polypeptide is Aspartate carbamoyltransferase catalytic subunit (Campylobacter jejuni subsp. jejuni serotype O:6 (strain 81116 / NCTC 11828)).